A 391-amino-acid polypeptide reads, in one-letter code: uncharacterized protein (391 aa).

Residues 4 to 24 (FALIVGIVALAIFSFLYIQLY) traverse the membrane as a helical segment.

Its subcellular location is the membrane. This is an uncharacterized protein from Haemophilus influenzae (strain ATCC 51907 / DSM 11121 / KW20 / Rd).